We begin with the raw amino-acid sequence, 141 residues long: Translation initiation factor 2 subunit beta (141 aa).

It belongs to the eIF-2-beta/eIF-5 family. In terms of assembly, heterotrimer composed of an alpha, a beta and a gamma chain.

EIF-2 functions in the early steps of protein synthesis by forming a ternary complex with GTP and initiator tRNA. The protein is Translation initiation factor 2 subunit beta of Thermofilum pendens (strain DSM 2475 / Hrk 5).